A 554-amino-acid chain; its full sequence is Chaperonin GroEL (554 aa).

ATP contacts are provided by residues 30 to 33 (TLGP), K51, 87 to 91 (DGTTT), G416, and D503.

This sequence belongs to the chaperonin (HSP60) family. In terms of assembly, forms a cylinder of 14 subunits composed of two heptameric rings stacked back-to-back. Interacts with the co-chaperonin GroES.

It localises to the cytoplasm. The enzyme catalyses ATP + H2O + a folded polypeptide = ADP + phosphate + an unfolded polypeptide.. Functionally, together with its co-chaperonin GroES, plays an essential role in assisting protein folding. The GroEL-GroES system forms a nano-cage that allows encapsulation of the non-native substrate proteins and provides a physical environment optimized to promote and accelerate protein folding. This is Chaperonin GroEL from Holospora obtusa.